Here is a 264-residue protein sequence, read N- to C-terminus: Teichoic acids export ATP-binding protein TagH (264 aa).

The ABC transporter domain occupies 24–243; that stretch reads IKDALIPKNK…YEQFLKDFKK (220 aa). 57-64 provides a ligand contact to ATP; the sequence is GINGSGKS.

This sequence belongs to the ABC transporter superfamily. Teichoic acids exporter (TC 3.A.1.104.1) family. In terms of assembly, the complex is composed of two ATP-binding proteins (TagH) and two transmembrane proteins (TagG).

It localises to the cell membrane. It catalyses the reaction ATP + H2O + teichoic acidSide 1 = ADP + phosphate + teichoic acidSide 2.. Functionally, part of the ABC transporter complex TagGH involved in teichoic acids export. Responsible for energy coupling to the transport system. The sequence is that of Teichoic acids export ATP-binding protein TagH from Staphylococcus haemolyticus (strain JCSC1435).